Reading from the N-terminus, the 128-residue chain is Thor profilin (128 aa).

This sequence belongs to the Asgard profilin family.

The protein localises to the cytoplasm. It is found in the cytoskeleton. Its function is as follows. Has no profilin activity against rabbit actin. This Thorarchaeota archaeon (strain AB_25) protein is Thor profilin.